The sequence spans 448 residues: Phosphoglucosamine mutase (448 aa).

The active-site Phosphoserine intermediate is the S102. Mg(2+) is bound by residues S102, D241, D243, and D245. At S102 the chain carries Phosphoserine.

Belongs to the phosphohexose mutase family. Requires Mg(2+) as cofactor. Activated by phosphorylation.

The enzyme catalyses alpha-D-glucosamine 1-phosphate = D-glucosamine 6-phosphate. Functionally, catalyzes the conversion of glucosamine-6-phosphate to glucosamine-1-phosphate. The chain is Phosphoglucosamine mutase from Ruegeria pomeroyi (strain ATCC 700808 / DSM 15171 / DSS-3) (Silicibacter pomeroyi).